We begin with the raw amino-acid sequence, 563 residues long: Rhodopsin kinase GRK1 (563 aa).

Residues 1 to 15 (MDFGSLETVVANSAF) are interaction with RCVRN. The interval 1–189 (MDFGSLETVV…LEAQPMGEDW (189 aa)) is N-terminal. Ser5 is subject to Phosphoserine. At Thr8 the chain carries Phosphothreonine. At Ser21 the chain carries Phosphoserine; by PKA and autocatalysis. Positions 58–175 (FESVCLEQPI…LGSLYFLRFL (118 aa)) constitute an RGS domain. Residues 190-455 (FLDFRVLGKG…CDKLRAHPLF (266 aa)) form the Protein kinase domain. ATP is bound by residues 196 to 204 (LGKGGFGEV) and Lys219. Asp317 acts as the Proton acceptor in catalysis. Positions 456–521 (KDLNWRQLEA…GNCPIPWQEE (66 aa)) constitute an AGC-kinase C-terminal domain. The C-terminal stretch occupies residues 456–563 (KDLNWRQLEA…SSKSGMCLVS (108 aa)). Ser491 carries the post-translational modification Phosphoserine; by autocatalysis. The residue at position 492 (Thr492) is a Phosphothreonine; by autocatalysis. The interval 539–563 (QMPDDMKGISGGSSSSSKSGMCLVS) is disordered. Residues 550-563 (GSSSSSKSGMCLVS) are compositionally biased toward low complexity. Position 560 is a cysteine methyl ester (Cys560). Cys560 carries S-farnesyl cysteine lipidation. Positions 561 to 563 (LVS) are cleaved as a propeptide — removed in mature form.

The protein belongs to the protein kinase superfamily. AGC Ser/Thr protein kinase family. GPRK subfamily. Interacts (via N-terminus) with RCVRN (via C-terminus); the interaction is Ca(2+)-dependent. Interacts (when prenylated) with PDE6D; this promotes release from membranes. May form a complex composed of RHO, GRK1 and RCVRN in a Ca(2+)-dependent manner; RCVRN prevents the interaction between GRK1 and RHO. Post-translationally, autophosphorylated, Ser-21 is a minor site of autophosphorylation compared to Ser-491 and Thr-492. Phosphorylation at Ser-21 is regulated by light and activated by cAMP. Farnesylation is required for full activity. In terms of tissue distribution, retinal-specific. Expressed in rods and cones cells.

Its subcellular location is the membrane. It is found in the cell projection. The protein resides in the cilium. The protein localises to the photoreceptor outer segment. It catalyses the reaction L-threonyl-[rhodopsin] + ATP = O-phospho-L-threonyl-[rhodopsin] + ADP + H(+). The catalysed reaction is L-seryl-[rhodopsin] + ATP = O-phospho-L-seryl-[rhodopsin] + ADP + H(+). Inhibited by RCVRN, which prevents the interaction between GRK1 and RHO. Inhibition is calcium-dependent. Inhibited by phosphorylation of Ser-21. Retina-specific kinase involved in the signal turnoff via phosphorylation of rhodopsin (RHO), the G protein- coupled receptor that initiates the phototransduction cascade. This rapid desensitization is essential for scotopic vision and permits rapid adaptation to changes in illumination. May play a role in the maintenance of the outer nuclear layer in the retina. This is Rhodopsin kinase GRK1 from Homo sapiens (Human).